Reading from the N-terminus, the 381-residue chain is Heterogeneous nuclear rnp K-like protein 2 (381 aa).

Positions 1–34 (MSQFFEAATPVAIPTNNTNGGSSDAGSAATGGAP) are disordered. The span at 15 to 33 (TNNTNGGSSDAGSAATGGA) shows a compositional bias: low complexity. KH domains are found at residues 43–107 (TINH…IGDI), 156–221 (IGYV…LIEI), and 258–326 (NTRI…ESML). The segment at 344 to 381 (LEAAEGDATVVTERSDSASFLEEKEEPQKNHDNKEEQS) is disordered. Residues Ser-358, Ser-360, and Ser-362 each carry the phosphoserine modification. A compositionally biased stretch (basic and acidic residues) spans 369-381 (EPQKNHDNKEEQS).

Belongs to the HEK2 family. As to quaternary structure, binds RNA. Phosphorylated by the plasma membrane-Anchored casein kinase YCK1. Phosphorylation at its C-terminus reduces its RNA-binding capacity.

Its subcellular location is the cytoplasm. The protein resides in the P-body. It is found in the nucleus. The protein localises to the chromosome. It localises to the telomere. RNA-binding protein involved in the correct localization of transcripts in the cell. RNA localization is a widespread mechanism for achieving localized protein synthesis. Required for the asymmetric localization to the daughter cell nucleus of the ASH1 transcript, coding for a specific repressor of transcription. Overexpression inhibits translation of the ASH1 transcript. Involved in the stability of transcripts, like the MTL1 mRNA. Involved in structural and functional organization of telomeric chromatin and regulates silencing at the HMR locus. In Saccharomyces cerevisiae (strain JAY291) (Baker's yeast), this protein is Heterogeneous nuclear rnp K-like protein 2 (HEK2).